A 547-amino-acid chain; its full sequence is Pyochelin synthase PchD (547 aa).

This sequence belongs to the ATP-dependent AMP-binding enzyme family.

The catalysed reaction is salicylate + holo-[ACP] + ATP = salicyl-[ACP] + AMP + diphosphate. The protein operates within siderophore biosynthesis. It functions in the pathway antifungal biosynthesis. Functionally, involved in the biosynthesis of the siderophore pyochelin. Specifically adenylates salicylate and loads it onto the holo form of PchE via a thioester linkage to the phosphopanthetheine moiety. Is also involved in the synthesis of the antifungal antibiotic dihydroaeruginoic acid (Dha or hydroxyphenyl-thiazolinyl-carboxylate), a precursor of pyochelin. The sequence is that of Pyochelin synthase PchD from Pseudomonas aeruginosa (strain UCBPP-PA14).